The primary structure comprises 295 residues: MSGGLDVLQMKEEDVLKFLAAGTHLGGTNLDFQMEQYIYKRKSDGIYIINLKRTWEKLLLAARAIVAIENPADVSVISSRNTGQRAVLKFAAATGATPIAGRFTPGTFTNQIQAAFREPRLLVVTDPRADHQPLTEASYVNLPTIALCNTDSPLRYVDIAIPCNNKGAHSVGLMWWMLAREVLRMRGTISREHPWEVMPDLYFYRDPEEIEKEEQAAAEKAVTKEEFQGEWTAPAPEFTAAQPEVADWSEGVQVPSVPIQQFPTEDWSAQPATEDWSAAPTAQATEWVGATTEWS.

Ser-2 carries the N-acetylserine modification. Residue Ser-43 is modified to Phosphoserine. Lys-52 bears the N6-acetyllysine mark. The segment at 54–113 is interaction with PPP1R16B; the sequence is TWEKLLLAARAIVAIENPADVSVISSRNTGQRAVLKFAAATGATPIAGRFTPGTFTNQIQ. Position 89 is an N6-acetyllysine; alternate (Lys-89). Lys-89 is covalently cross-linked (Glycyl lysine isopeptide (Lys-Gly) (interchain with G-Cter in SUMO2); alternate). Phosphothreonine is present on Thr-97. Laminin-binding stretches follow at residues 161-180 and 205-229; these read IPCN…MLAR and RDPE…EFQG. [DE]-W-[ST] repeat units follow at residues 230 to 232, 247 to 249, 266 to 268, 275 to 277, and 293 to 295; these read EWT, DWS, and EWS. A laminin-binding region spans residues 242–295; that stretch reads QPEVADWSEGVQVPSVPIQQFPTEDWSAQPATEDWSAAPTAQATEWVGATTEWS. The tract at residues 266–295 is disordered; that stretch reads DWSAQPATEDWSAAPTAQATEWVGATTEWS.

Belongs to the universal ribosomal protein uS2 family. In terms of assembly, monomer (37LRP) and homodimer (67LR). Component of the small ribosomal subunit. Mature ribosomes consist of a small (40S) and a large (60S) subunit. The 40S subunit contains about 33 different proteins and 1 molecule of RNA (18S). The 60S subunit contains about 49 different proteins and 3 molecules of RNA (28S, 5.8S and 5S). Interacts with RPS21. Interacts with several laminins including at least LAMB1. Interacts with MDK. The mature dimeric form interacts with PPP1R16B (via its fourth ankyrin repeat). Interacts with PPP1CA only in the presence of PPP1R16B. Post-translationally, acylated. Acylation may be a prerequisite for conversion of the monomeric 37 kDa laminin receptor precursor (37LRP) to the mature dimeric 67 kDa laminin receptor (67LR), and may provide a mechanism for membrane association. In terms of processing, cleaved by stromelysin-3 (ST3) at the cell surface. Cleavage by stromelysin-3 may be a mechanism to alter cell-extracellular matrix interactions. In terms of tissue distribution, expressed in most neurons and in a subset of glial cells. The overall distribution of LR correlates with that reported for laminin-1 but also with brain regions classically associated with prion-related neurodegeneration.

It is found in the cell membrane. The protein resides in the cytoplasm. It localises to the nucleus. Required for the assembly and/or stability of the 40S ribosomal subunit. Required for the processing of the 20S rRNA-precursor to mature 18S rRNA in a late step of the maturation of 40S ribosomal subunits. Also functions as a cell surface receptor for laminin. Plays a role in cell adhesion to the basement membrane and in the consequent activation of signaling transduction pathways. May play a role in cell fate determination and tissue morphogenesis. Also acts as a receptor for several other ligands, including the pathogenic prion protein, viruses, and bacteria. Acts as a PPP1R16B-dependent substrate of PPP1CA. The sequence is that of Small ribosomal subunit protein uS2 (Rpsa) from Rattus norvegicus (Rat).